Consider the following 550-residue polypeptide: MFCVQCEQTIRTPAGNGCSYAQGMCGKTAETSDLQDLLIAALQGLSAWAVKAREYGIINHDVDNFAPRAFFSTLTNVNFDSPRIVGYAREAIALREALKAQCLSVDANAHCDNPMADLQLVSDDLGELQRQAAEFTPNKDKAAIGENILGLRLLCLYGLKGAAAYMEHAHVLGQYDNDIYAQYHKIMAWLGTWPADMNALLECAMEIGQMNFKVMSILDAGETTKYGHPTPTQVNVKATEGKCILISGHDLKDLYNLLEQTEGTGVNVYTHGEMLPAHGYPELRKFKHLVGNYGSGWQNQQVEFARFPGPIVMTSNCIIDPTVGSYDDRIWTRSIVGWPGVSHLEGDDFGPVIAQAQQMAGFPYSEIPHLITVGFGRQTLLGTADTLIDLVSREKLRHIFLVGGCDGARGERNYFTDFATSVPDDCLILTLACGKYRFNKLEFGDIEGLPRLVDAGQCNDAYSAIILAVTLAEKLGCGVNDLPLSLVLSWFEQKAIVILLTLLSLGVKNIVTGPTAPGFFTPDLLAILNEKFGLRSVTTVEEDMKQLLSA.

Residues C3, C6, C18, and C25 each contribute to the [2Fe-2S] cluster site. Positions 249, 273, 317, 405, 433, 458, 492, and 494 each coordinate hybrid [4Fe-2O-2S] cluster. C405 is modified (cysteine persulfide).

It belongs to the HCP family. Requires [2Fe-2S] cluster as cofactor. The cofactor is hybrid [4Fe-2O-2S] cluster.

It localises to the cytoplasm. It catalyses the reaction A + NH4(+) + H2O = hydroxylamine + AH2 + H(+). Its function is as follows. Catalyzes the reduction of hydroxylamine to form NH(3) and H(2)O. The polypeptide is Hydroxylamine reductase (Salmonella dublin (strain CT_02021853)).